Reading from the N-terminus, the 186-residue chain is Ribosome-recycling factor (186 aa).

This sequence belongs to the RRF family.

The protein localises to the cytoplasm. Its function is as follows. Responsible for the release of ribosomes from messenger RNA at the termination of protein biosynthesis. May increase the efficiency of translation by recycling ribosomes from one round of translation to another. This Chlorobium phaeobacteroides (strain BS1) protein is Ribosome-recycling factor.